The sequence spans 21 residues: Alpha-aminoadipic semialdehyde dehydrogenase (21 aa).

Belongs to the aldehyde dehydrogenase family. Homotetramer.

It carries out the reaction (S)-2-amino-6-oxohexanoate + NADP(+) + H2O = L-2-aminoadipate + NADPH + 2 H(+). It catalyses the reaction (S)-2-amino-6-oxohexanoate + NAD(+) + H2O = L-2-aminoadipate + NADH + 2 H(+). In Ctenopharyngodon idella (Grass carp), this protein is Alpha-aminoadipic semialdehyde dehydrogenase (aldh7a1).